A 450-amino-acid polypeptide reads, in one-letter code: Phosphoglucosamine mutase 2 (450 aa).

Residue Ser101 is the Phosphoserine intermediate of the active site. Mg(2+)-binding residues include Ser101, Asp245, Asp247, and Asp249. Position 101 is a phosphoserine (Ser101).

Belongs to the phosphohexose mutase family. It depends on Mg(2+) as a cofactor. Post-translationally, activated by phosphorylation.

It carries out the reaction alpha-D-glucosamine 1-phosphate = D-glucosamine 6-phosphate. Its function is as follows. Catalyzes the conversion of glucosamine-6-phosphate to glucosamine-1-phosphate. The chain is Phosphoglucosamine mutase 2 from Shewanella sp. (strain MR-7).